An 80-amino-acid chain; its full sequence is Exodeoxyribonuclease 7 small subunit (80 aa).

It belongs to the XseB family. As to quaternary structure, heterooligomer composed of large and small subunits.

Its subcellular location is the cytoplasm. It carries out the reaction Exonucleolytic cleavage in either 5'- to 3'- or 3'- to 5'-direction to yield nucleoside 5'-phosphates.. Functionally, bidirectionally degrades single-stranded DNA into large acid-insoluble oligonucleotides, which are then degraded further into small acid-soluble oligonucleotides. The sequence is that of Exodeoxyribonuclease 7 small subunit from Escherichia coli (strain SE11).